A 650-amino-acid chain; its full sequence is Cytosolic Fe-S cluster assembly factor NAR1 (650 aa).

[4Fe-4S] cluster contacts are provided by Cys22, Cys81, Cys84, Cys87, Cys215, Cys270, Cys480, and Cys484.

This sequence belongs to the NARF family.

In terms of biological role, component of the cytosolic Fe/S protein assembly machinery. Required for maturation of extramitochondrial Fe/S proteins. May play a role in the transfer of pre-assembled Fe/S clusters to target apoproteins. The chain is Cytosolic Fe-S cluster assembly factor NAR1 (NAR1) from Cryptococcus neoformans var. neoformans serotype D (strain JEC21 / ATCC MYA-565) (Filobasidiella neoformans).